The chain runs to 309 residues: D-alanine--D-alanine ligase (309 aa).

One can recognise an ATP-grasp domain in the interval 106 to 305; that stretch reads KMLWKAFGLP…FEQLVVKILE (200 aa). 136–191 serves as a coordination point for ATP; the sequence is VEKLGLPVMVKPSLEGSSVGLTKVKRVEDLKSAVDFALKYDDTVLIEEWLSGAEFT. D259, E272, and N274 together coordinate Mg(2+).

Belongs to the D-alanine--D-alanine ligase family. Mg(2+) serves as cofactor. Mn(2+) is required as a cofactor.

The protein resides in the cytoplasm. The enzyme catalyses 2 D-alanine + ATP = D-alanyl-D-alanine + ADP + phosphate + H(+). It functions in the pathway cell wall biogenesis; peptidoglycan biosynthesis. Cell wall formation. The chain is D-alanine--D-alanine ligase from Pasteurella multocida (strain Pm70).